Reading from the N-terminus, the 356-residue chain is Vesicular integral-membrane protein VIP36 (356 aa).

The first 44 residues, 1-44 (MAAEGWIWRWGWGRRCLGRPGLLGPGPGPTTPLFLLLLLGSVTA), serve as a signal peptide directing secretion. Topologically, residues 45–322 (DITDGNSEHL…FRSGPLTGWR (278 aa)) are lumenal. Positions 52–276 (EHLKREHSLI…DIISMKLFQL (225 aa)) constitute an L-type lectin-like domain. Positions 96 and 131 each coordinate a carbohydrate. Residues D162, Y164, and N166 each coordinate Ca(2+). Residue 164–166 (YPN) participates in a carbohydrate binding. N-linked (GlcNAc...) asparagine glycosylation occurs at N183. Residue H190 participates in a carbohydrate binding. Residue D193 participates in Ca(2+) binding. C202 and C239 form a disulfide bridge. 260 to 262 (GDL) lines the a carbohydrate pocket. Residues 323-345 (VFLLLLCALLGIVVCAVVGAVVF) form a helical membrane-spanning segment. Residues 346 to 356 (QKRQERNKRFY) are Cytoplasmic-facing.

It depends on Ca(2+) as a cofactor. As to expression, ubiquitous.

It localises to the endoplasmic reticulum-Golgi intermediate compartment membrane. Its subcellular location is the golgi apparatus membrane. The protein localises to the endoplasmic reticulum membrane. Its function is as follows. Plays a role as an intracellular lectin in the early secretory pathway. Interacts with N-acetyl-D-galactosamine and high-mannose type glycans and may also bind to O-linked glycans. Involved in the transport and sorting of glycoproteins carrying high mannose-type glycans. In Homo sapiens (Human), this protein is Vesicular integral-membrane protein VIP36 (LMAN2).